We begin with the raw amino-acid sequence, 312 residues long: Olfactory receptor 6C2 (312 aa).

Residues 1 to 23 (MKNHTVIRTFILLGLTGDPHLQV) lie on the Extracellular side of the membrane. An N-linked (GlcNAc...) asparagine glycan is attached at N3. A helical membrane pass occupies residues 24-44 (LLFIFLFLTYMLSVTGNLTII). The Cytoplasmic portion of the chain corresponds to 45-52 (TLTLVDHH). Residues 53-73 (LKTPMYFFLRNFSFLEVSFTT) form a helical membrane-spanning segment. Residues 74–97 (VCIPRFLYNISMGDNTITYNACAS) are Extracellular-facing. The N-linked (GlcNAc...) asparagine glycan is linked to N82. Cysteines 95 and 187 form a disulfide. The helical transmembrane segment at 98-118 (QIFFVILFGATEFFLLAAMSY) threads the bilayer. Residues 119 to 137 (DRYVAICKPLHYVVIMNNR) are Cytoplasmic-facing. A helical transmembrane segment spans residues 138 to 158 (VCTLLVLCCWVAGLMIIVPPL). Over 159–195 (SLGLQLEFCDSNAIDHFSCDAGPLLKISCSDTWVIEQ) the chain is Extracellular. The helical transmembrane segment at 196 to 215 (MVILMAVFALIITLVCVILS) threads the bilayer. The Cytoplasmic segment spans residues 216–235 (YLYIVRTILKFPSVQQRKKA). The helical transmembrane segment at 236 to 256 (FSTCSSHMIVVSIAYGSCIFI) threads the bilayer. The Extracellular segment spans residues 257–269 (YIKPSAKDEVAIN). A helical transmembrane segment spans residues 270 to 290 (KGVSVLTTSVAPLLNPFIYTL). Over 291–312 (RNKQVKQAFSDSIKRIAFLSKK) the chain is Cytoplasmic.

This sequence belongs to the G-protein coupled receptor 1 family.

It localises to the cell membrane. Odorant receptor. The chain is Olfactory receptor 6C2 (OR6C2) from Homo sapiens (Human).